The following is a 412-amino-acid chain: Tyrosine--tRNA ligase (412 aa).

Positions 56 to 65 (PSAPDVHIGH) match the 'HIGH' region motif. The 'KMSKS' region signature appears at 240-244 (KMSKS). Residue K243 coordinates ATP. An S4 RNA-binding domain is found at 351–412 (VWIVDLLVTL…GKRKFKKLVR (62 aa)).

It belongs to the class-I aminoacyl-tRNA synthetase family. TyrS type 2 subfamily. Homodimer.

It is found in the cytoplasm. It carries out the reaction tRNA(Tyr) + L-tyrosine + ATP = L-tyrosyl-tRNA(Tyr) + AMP + diphosphate + H(+). In terms of biological role, catalyzes the attachment of tyrosine to tRNA(Tyr) in a two-step reaction: tyrosine is first activated by ATP to form Tyr-AMP and then transferred to the acceptor end of tRNA(Tyr). The sequence is that of Tyrosine--tRNA ligase from Halalkalibacterium halodurans (strain ATCC BAA-125 / DSM 18197 / FERM 7344 / JCM 9153 / C-125) (Bacillus halodurans).